We begin with the raw amino-acid sequence, 464 residues long: UDP-N-acetylmuramoylalanine--D-glutamate ligase (464 aa).

127-133 contacts ATP; sequence GSNGKST.

Belongs to the MurCDEF family.

Its subcellular location is the cytoplasm. The enzyme catalyses UDP-N-acetyl-alpha-D-muramoyl-L-alanine + D-glutamate + ATP = UDP-N-acetyl-alpha-D-muramoyl-L-alanyl-D-glutamate + ADP + phosphate + H(+). It functions in the pathway cell wall biogenesis; peptidoglycan biosynthesis. Functionally, cell wall formation. Catalyzes the addition of glutamate to the nucleotide precursor UDP-N-acetylmuramoyl-L-alanine (UMA). This chain is UDP-N-acetylmuramoylalanine--D-glutamate ligase, found in Dinoroseobacter shibae (strain DSM 16493 / NCIMB 14021 / DFL 12).